Consider the following 761-residue polypeptide: NADP-dependent malic enzyme (761 aa).

Positions 1-437 (MPGIDKTDRA…QLSARRDPIA (437 aa)) are malic enzyme. Tyr-49 (proton donor) is an active-site residue. The active-site Proton acceptor is Lys-104. The a divalent metal cation site is built by Glu-146, Asp-147, and Asp-172. NADP(+)-binding positions include 205 to 208 (AGAA), Asn-297, and Asn-329. Residues 438-761 (STLQRIVERV…AAIAAYNAGT (324 aa)) are phosphate acetyltransferase.

This sequence in the N-terminal section; belongs to the malic enzymes family. In the C-terminal section; belongs to the phosphate acetyltransferase and butyryltransferase family. In terms of assembly, homooctamer. The cofactor is Mg(2+). Mn(2+) is required as a cofactor.

It catalyses the reaction (S)-malate + NADP(+) = pyruvate + CO2 + NADPH. The catalysed reaction is oxaloacetate + H(+) = pyruvate + CO2. This is NADP-dependent malic enzyme (tme) from Rhizobium meliloti (strain 1021) (Ensifer meliloti).